We begin with the raw amino-acid sequence, 248 residues long: Phosphoribosyl isomerase A (248 aa).

D14 serves as the catalytic Proton acceptor. Residue D133 is the Proton donor of the active site.

The protein belongs to the HisA/HisF family.

It localises to the cytoplasm. It catalyses the reaction 1-(5-phospho-beta-D-ribosyl)-5-[(5-phospho-beta-D-ribosylamino)methylideneamino]imidazole-4-carboxamide = 5-[(5-phospho-1-deoxy-D-ribulos-1-ylimino)methylamino]-1-(5-phospho-beta-D-ribosyl)imidazole-4-carboxamide. The enzyme catalyses N-(5-phospho-beta-D-ribosyl)anthranilate = 1-(2-carboxyphenylamino)-1-deoxy-D-ribulose 5-phosphate. The protein operates within amino-acid biosynthesis; L-histidine biosynthesis; L-histidine from 5-phospho-alpha-D-ribose 1-diphosphate: step 4/9. Its pathway is amino-acid biosynthesis; L-tryptophan biosynthesis; L-tryptophan from chorismate: step 3/5. In terms of biological role, involved in both the histidine and tryptophan biosynthetic pathways. This is Phosphoribosyl isomerase A from Mycobacterium sp. (strain JLS).